The primary structure comprises 299 residues: MSAVGLPLWRQHAHALWQLSKPRVVALIVFCAVIGMFLASPGVPDAAVVVPATLGIALVAGAAAMVNCLVERGVDVRMRRTAWRATATGEVGARETLLVALAVGGMGLALLLACCNALTAWLTLGTFVGYAIVYTLLLKPNTPQNIVIGGASGAMPPVLGWTAVNGQIDAFALALFLIIYTWTPPHFWALALYRRDDYARAGLPMLPVTHGQRYTTLSIVLYGFLLTAVTLLPVALGEAGAIYLGAVLLLDGRLLFLAVRLHRQYADALARRLFAWSIWYLTWLFAALLLDHYYLIPLN.

9 consecutive transmembrane segments (helical) span residues 24 to 44, 46 to 66, 97 to 117, 118 to 138, 146 to 166, 170 to 190, 217 to 237, 239 to 259, and 278 to 298; these read VVALIVFCAVIGMFLASPGVP, AAVVVPATLGIALVAGAAAMV, LLVALAVGGMGLALLLACCNA, LTAWLTLGTFVGYAIVYTLLL, IVIGGASGAMPPVLGWTAVNG, AFALALFLIIYTWTPPHFWAL, LSIVLYGFLLTAVTLLPVALG, AGAIYLGAVLLLDGRLLFLAV, and IWYLTWLFAALLLDHYYLIPL.

This sequence belongs to the UbiA prenyltransferase family. Protoheme IX farnesyltransferase subfamily.

Its subcellular location is the cell inner membrane. The catalysed reaction is heme b + (2E,6E)-farnesyl diphosphate + H2O = Fe(II)-heme o + diphosphate. The protein operates within porphyrin-containing compound metabolism; heme O biosynthesis; heme O from protoheme: step 1/1. Its function is as follows. Converts heme B (protoheme IX) to heme O by substitution of the vinyl group on carbon 2 of heme B porphyrin ring with a hydroxyethyl farnesyl side group. The sequence is that of Protoheme IX farnesyltransferase 1 from Chromobacterium violaceum (strain ATCC 12472 / DSM 30191 / JCM 1249 / CCUG 213 / NBRC 12614 / NCIMB 9131 / NCTC 9757 / MK).